Reading from the N-terminus, the 927-residue chain is Nonsense-mediated mRNA decay factor SMG8 (927 aa).

Disordered regions lie at residues 543-581 (NTGKSGAPQDEDAGEDEAEEEEGQERELPTKKQLQNTAS), 611-636 (QARSEQLSNSEQNTTRSGSSSVDTEN), and 643-662 (QEPAKKEAREDVGPTDAVST). Positions 551-566 (QDEDAGEDEAEEEEGQ) are enriched in acidic residues. Over residues 613–633 (RSEQLSNSEQNTTRSGSSSVD) the composition is skewed to polar residues. Positions 644-654 (EPAKKEAREDV) are enriched in basic and acidic residues.

The protein belongs to the SMG8 family.

Involved in nonsense-mediated decay (NMD) of mRNAs containing premature stop codons. Probable component of kinase complex containing nonC and recruited to stalled ribosomes. The polypeptide is Nonsense-mediated mRNA decay factor SMG8 (Drosophila sechellia (Fruit fly)).